The chain runs to 547 residues: MAAKDVVFGDAARAKMVEGVNILANAVKVTLGPKGRNVVLERSFGGPTVTKDGVSVAKEIELKDKLQNMGAQMVKEVASKTSDNAGDGTTTATVLAQSIVREGMKFVAAGMNPMDLKRGIDKAVAAAVEELKKVSKPTTTSKEIAQVGAISANSDTSIGERIAEAMDKVGKEGVITVEDGKSLADELEVVEGMQFDRGYLSPYFINNPEKQVVQLDNPFVLLFDKKISNIRDLLPVLEQVAKAGRPLLIVAEDVEGEALATLVVNNIRGILKTAAVKAPGFGDRRKAMLEDIAILTGGTVIAEEIGLTLEKAGLNDLGQAKRIEIGKENTIIIDGAGDAAAIEGRVKQIRAQIEEATSDYDREKLQERVAKLAGGVAVIKVGAATEVEMKEKKARVEDALHATRAAVEEGIVPGGGVALLRARAAISALTGENADQNAGIKIVLRAMEEPLRQIVLNAGEEASVVVAKVIEGKGNYGYNAASGEYGDLVEMGVLDPTKVTRTALQNAASVASLMLTTDCAVAESPKEESAPAMPGGMGGMGGMEGMM.

ATP-binding positions include 30-33, Lys51, 87-91, Gly415, 479-481, and Asp495; these read TLGP, DGTTT, and NAA.

Belongs to the chaperonin (HSP60) family. Forms a cylinder of 14 subunits composed of two heptameric rings stacked back-to-back. Interacts with the co-chaperonin GroES.

It is found in the cytoplasm. The catalysed reaction is ATP + H2O + a folded polypeptide = ADP + phosphate + an unfolded polypeptide.. Its function is as follows. Together with its co-chaperonin GroES, plays an essential role in assisting protein folding. The GroEL-GroES system forms a nano-cage that allows encapsulation of the non-native substrate proteins and provides a physical environment optimized to promote and accelerate protein folding. The chain is Chaperonin GroEL from Cupriavidus necator (strain ATCC 17699 / DSM 428 / KCTC 22496 / NCIMB 10442 / H16 / Stanier 337) (Ralstonia eutropha).